We begin with the raw amino-acid sequence, 98 residues long: NADH-ubiquinone oxidoreductase chain 4L (98 aa).

3 helical membrane-spanning segments follow: residues 1-21 (MSLIHMNVMMAFSMSLVGLLM), 26-46 (LMSALLCLEGMALSLFIFTTL), and 61-81 (IILLVFTACEAAIGLALLVMI).

The protein belongs to the complex I subunit 4L family. Core subunit of respiratory chain NADH dehydrogenase (Complex I) which is composed of 45 different subunits.

The protein localises to the mitochondrion inner membrane. The enzyme catalyses a ubiquinone + NADH + 5 H(+)(in) = a ubiquinol + NAD(+) + 4 H(+)(out). Functionally, core subunit of the mitochondrial membrane respiratory chain NADH dehydrogenase (Complex I) which catalyzes electron transfer from NADH through the respiratory chain, using ubiquinone as an electron acceptor. Part of the enzyme membrane arm which is embedded in the lipid bilayer and involved in proton translocation. This is NADH-ubiquinone oxidoreductase chain 4L (MT-ND4L) from Physeter macrocephalus (Sperm whale).